The sequence spans 632 residues: MSFKVNWNSLETDSLSTWTKEILTNALNSGKSPHILASNISIKDLNFGQSAPDFEILEIGELDRDRFRGIFKISYSGDFHLTLHTKVQANPLNIYYSNSLEKEVGIEDSEFITPQFGLSNEQFAIPLDLKLSDIKISGIGIIVFSKSKGLTLVFRNDPLDSIKVSSTFDTVQVLANFLQKQIESQIRDLFRETLPTLIHQLSLKYLSLDNNMNELRTKLAANASTSSSSTSSTSSSTTSSSSSSSPSSFTSSLDSANTTTSLKMLENEEEDFSLVYSAKNLQKNLKLFKSRETMSLHIPRFRNIVQRTHLDKFTKNYPNLINSLALSNNELQKFTHHPHSHNAVPIDIFKNESFEKTDGLLKDISNIQAGNYYKFATQKENTVKPKRRVIRLGKSKNKSKSKTETKTEHNDENSNNDNQIVPLSSTPASSSSSTLIEEMVEEPSTPIMKETSEFINPATKTTPQTQIHHPTPRKLELRVQADPELHSEVSTDLHSRSSAHHALYQEFIRSTQSPSLYDKVLTTCGGVGLGNTGYFSFVPQRALSASPIKALNEELNEKKSMNHMDFNRVSQRLEEKLKQNNGDMLRKNNSMNSNSNSVDAEDKPQLVHHDTLSATAAAYAGLFTAPPPPYYH.

Residues 1–203 (MSFKVNWNSL…LPTLIHQLSL (203 aa)) enclose the SMP-LTD domain. Disordered regions lie at residues 221-253 (ANAS…TSSL) and 384-435 (KPKR…SSTL). Residues 224–252 (STSSSSTSSTSSSTTSSSSSSSPSSFTSS) show a composition bias toward low complexity. Basic residues predominate over residues 384–400 (KPKRRVIRLGKSKNKSK). Over residues 401–412 (SKTETKTEHNDE) the composition is skewed to basic and acidic residues. Residues 422–435 (PLSSTPASSSSSTL) show a composition bias toward low complexity.

It belongs to the MDM34 family. Component of the ER-mitochondria encounter structure (ERMES) or MDM complex, composed of MMM1, MDM10, MDM12 and MDM34.

It localises to the mitochondrion outer membrane. Its function is as follows. Component of the ERMES/MDM complex, which serves as a molecular tether to connect the endoplasmic reticulum (ER) and mitochondria. Components of this complex are involved in the control of mitochondrial shape and protein biogenesis, and function in nonvesicular lipid trafficking between the ER and mitochondria. MDM34 is required for the interaction of the ER-resident membrane protein MMM1 and the outer mitochondrial membrane-resident beta-barrel protein MDM10. The protein is Mitochondrial distribution and morphology protein 34 of Lodderomyces elongisporus (strain ATCC 11503 / CBS 2605 / JCM 1781 / NBRC 1676 / NRRL YB-4239) (Yeast).